A 147-amino-acid chain; its full sequence is Hemoglobin subunit beta (147 aa).

Val-2 carries the post-translational modification N-acetylvaline. One can recognise a Globin domain in the interval 3 to 147; that stretch reads HLTAEEKSAV…VANALAHKYH (145 aa). Residue Thr-13 is modified to Phosphothreonine. Phosphoserine is present on Ser-45. Lys-60 is modified (N6-acetyllysine). His-64 contributes to the heme b binding site. At Lys-83 the chain carries N6-acetyllysine. A heme b-binding site is contributed by His-93. At Cys-94 the chain carries S-nitrosocysteine. Lys-145 bears the N6-acetyllysine mark.

It belongs to the globin family. Heterotetramer of two alpha chains and two beta chains. As to expression, red blood cells.

Its function is as follows. Involved in oxygen transport from the lung to the various peripheral tissues. The sequence is that of Hemoglobin subunit beta (HBB) from Sapajus apella (Brown-capped capuchin).